A 1033-amino-acid polypeptide reads, in one-letter code: MAESDSTDFDLLWYLENLSDKEFQSFKKYLARKILDFKLPQFPLIQMTKEELANVLPISYEGQYIWNMLFSIFSMMRKEDLCRKIIGRRNRNQEACKAVMRRKFMLQWESHTFGKFHYKFFRDVSSDVFYILQLAYDSTSYYSANNLNVFLMGERASGKTIVINLAVLRWIKGEMWQNMISYVVHLTAHEINQMTNSSLAELIAKDWPDGQAPIADILSDPKKLLFILEDLDNIRFELNVNESALCSNSTQKVPIPVLLVSLLKRKMAPGCWFLISSRPTRGNNVKTFLKEVDCCTTLQLSNGKREIYFNSFFKDRQRASAALQLVHEDEILVGLCRVAILCWITCTVLKRQMDKGRDFQLCCQTPTDLHAHFLADALTSEAGLTANQYHLGLLKRLCLLAAGGLFLSTLNFSGEDLRCVGFTEADVSVLQAANILLPSNTHKDRYKFIHLNVQEFCTAIAFLMAVPNYLIPSGSREYKEKREQYSDFNQVFTFIFGLLNANRRKILETSFGYQLPMVDSFKWYSVGYMKHLDRDPEKLTHHMPLFYCLYENREEEFVKTIVDALMEVTVYLQSDKDMMVSLYCLDYCCHLRTLKLSVQRIFQNKEPLIRPTASQMKSLVYWREICSLFYTMESLRELHIFDNDLNGISERILSKALEHSSCKLRTLKLSYVSTASGFEDLLKALARNRSLTYLSINCTSISLNMFSLLHDILHEPTCQISHLSLMKCDLRASECEEIASLLISGGSLRKLTLSSNPLRSDGMNILCDALLHPNCTLISLVLVFCCLTENCCSALGRVLLFSPTLRQLDLCVNRLKNYGVLHVTFPLLFPTCQLEELHLSGCFFSSDICQYIAIVIATNEKLRSLEIGSNKIEDAGMQLLCGGLRHPNCMLVNIGLEECMLTSACCRSLASVLTTNKTLERLNLLQNHLGNDGVAKLLESLISPDCVLKVVGLPLTGLNTQTQQLLMTVKERKPSLIFLSETWSLKEGREIGVTPASQPGSIIPNSNLDYMFFKFPRMSAAMRTSNTASRQPL.

Residues Met1 to Arg91 form the Pyrin domain. The NACHT domain occupies Leu147–Leu470. Gly153–Thr160 serves as a coordination point for ATP. LRR repeat units follow at residues Cys588–Pro611, Met632–Lys655, Gly745–Asp768, Ser802–Leu827, Asn859–Gly882, and Leu919–Pro944.

It belongs to the NLRP family.

Functionally, involved in inflammation. This Homo sapiens (Human) protein is NACHT, LRR and PYD domains-containing protein 11 (NLRP11).